The following is a 106-amino-acid chain: UPF0145 protein BF0270 (106 aa).

The protein belongs to the UPF0145 family.

This is UPF0145 protein BF0270 from Bacteroides fragilis (strain YCH46).